A 132-amino-acid chain; its full sequence is Small ribosomal subunit protein bS6 (132 aa).

Positions Asp94–Asp132 are disordered. Over residues Asp122–Asp132 the composition is skewed to acidic residues.

Belongs to the bacterial ribosomal protein bS6 family.

Its function is as follows. Binds together with bS18 to 16S ribosomal RNA. In Psychrobacter arcticus (strain DSM 17307 / VKM B-2377 / 273-4), this protein is Small ribosomal subunit protein bS6.